The following is a 637-amino-acid chain: Extracellular metalloproteinase 2 (637 aa).

An N-terminal signal peptide occupies residues 1–20 (MRSFLLASLASVATLKSAQA). A propeptide spanning residues 21-244 (HPAHSTRGLS…VHAVVDYSAD (224 aa)) is cleaved from the precursor. 4 N-linked (GlcNAc...) asparagine glycosylation sites follow: Asn302, Asn328, Asn337, and Asn413. Position 430 (His430) interacts with Zn(2+). Glu431 is an active-site residue. Zn(2+) is bound at residue His434.

Belongs to the peptidase M36 family. It depends on Zn(2+) as a cofactor.

The protein resides in the secreted. Its function is as follows. Secreted metalloproteinase that allows assimilation of proteinaceous substrates. The polypeptide is Extracellular metalloproteinase 2 (MEP2) (Phaeosphaeria nodorum (strain SN15 / ATCC MYA-4574 / FGSC 10173) (Glume blotch fungus)).